We begin with the raw amino-acid sequence, 380 residues long: MAAPWWRVVLNGSRNWRGFSTSAALSRRAAPLGPMPNEDIDVSNLERLKKYRSFDRYRRRAEREARDPHWWRTYREHFGEESDPKDTVDIGLPPPKVCRTQQLLERKRVLRELRTSVEEERASRLRTASIPLEAVRAEWERTCGPYHKQRLAEYYGLYRDLFHGATFVPRVPLHVAYAIGEDDLVPVYYGNEVTPTEAAQPPEVTYEADEGSMWTLLLTNLDGHLLEPDAEYVHWLVTNIPGSRVAEGEETCPYLPPFPARGSGFHRFAFLLFKQDKPVDFSGDTRPSPCYQLAQRTFHTFDFYKKHQDAMTPAGLAFFQCRWDDSVTHIFHQLLDMREPVFEFVRPPPYHPKQKCFPHRQPLRYLDRYRDSHEPTYGFY.

A mitochondrion-targeting transit peptide spans methionine 1–serine 26. Positions glutamine 101 to alanine 122 form a coiled coil.

Belongs to the phosphatidylethanolamine-binding protein family. Mitochondrion-specific ribosomal protein mL38 subfamily. In terms of assembly, component of the mitochondrial ribosome large subunit (39S) which comprises a 16S rRNA and about 50 distinct proteins.

The protein localises to the mitochondrion. The polypeptide is Large ribosomal subunit protein mL38 (MRPL38) (Bos taurus (Bovine)).